We begin with the raw amino-acid sequence, 445 residues long: MRIHFVGIGGIGMSSLALHSRLIGEDVYGSDIYESEQTEILRKLGVKIFIGHNYNNWLYPDIVVHTPAVHSDNPEIIRARSNGIRVVSRFEFLYDILNNGKTQFAVTGSDGKTTTTAMLAHCLKVLGEDPTVFLGGIHRSLEFGNYRPGKGPYVYELDESQPEFSRFSPDYMIITNARGDHLENYSGDRQLYRDCFRSVVMSTRKSVVTFSEDENTSDLGTWTFGKSINSTCRLIDRNRNGLFQFAKIEINGKEYNLTLKVPGEHNILNAMAVITLLWSAGHEVEEVLKALEDFTGTYRRFTVTVIDEKRKVYMIDDYAHTPDEIKSLLSTTREVFPSQKRVVIFQPHRYSRLMREDGNFAKALKDADEIYITEVYSAFEQTIPQISSKVIADGLVSYGKKAQYVADADLLIENFQLQENTIYLFVGAGDIIRISQKFAKMHAKK.

Residue 108-114 (GSDGKTT) coordinates ATP.

Belongs to the MurCDEF family.

Its subcellular location is the cytoplasm. The catalysed reaction is UDP-N-acetyl-alpha-D-muramate + L-alanine + ATP = UDP-N-acetyl-alpha-D-muramoyl-L-alanine + ADP + phosphate + H(+). It functions in the pathway cell wall biogenesis; peptidoglycan biosynthesis. Cell wall formation. In Pseudothermotoga lettingae (strain ATCC BAA-301 / DSM 14385 / NBRC 107922 / TMO) (Thermotoga lettingae), this protein is UDP-N-acetylmuramate--L-alanine ligase.